The sequence spans 154 residues: MutT-like protein (154 aa).

The region spanning Pro-15–Asp-136 is the Nudix hydrolase domain. 4 residues coordinate Mg(2+): Gly-48, Glu-63, Glu-66, and Glu-67. Positions Gly-48 to Gly-69 match the Nudix box motif.

The protein belongs to the Nudix hydrolase family.

The polypeptide is MutT-like protein (Streptomyces ambofaciens).